Consider the following 102-residue polypeptide: Urease subunit beta (102 aa).

This sequence belongs to the urease beta subunit family. Heterotrimer of UreA (gamma), UreB (beta) and UreC (alpha) subunits. Three heterotrimers associate to form the active enzyme.

Its subcellular location is the cytoplasm. The enzyme catalyses urea + 2 H2O + H(+) = hydrogencarbonate + 2 NH4(+). Its pathway is nitrogen metabolism; urea degradation; CO(2) and NH(3) from urea (urease route): step 1/1. The sequence is that of Urease subunit beta from Blochmanniella pennsylvanica (strain BPEN).